We begin with the raw amino-acid sequence, 874 residues long: Alanine--tRNA ligase (874 aa).

Residues H563, H567, C665, and H669 each coordinate Zn(2+).

Belongs to the class-II aminoacyl-tRNA synthetase family. Zn(2+) serves as cofactor.

Its subcellular location is the cytoplasm. The enzyme catalyses tRNA(Ala) + L-alanine + ATP = L-alanyl-tRNA(Ala) + AMP + diphosphate. Catalyzes the attachment of alanine to tRNA(Ala) in a two-step reaction: alanine is first activated by ATP to form Ala-AMP and then transferred to the acceptor end of tRNA(Ala). Also edits incorrectly charged Ser-tRNA(Ala) and Gly-tRNA(Ala) via its editing domain. In Actinobacillus pleuropneumoniae serotype 7 (strain AP76), this protein is Alanine--tRNA ligase.